The primary structure comprises 86 residues: Evasin-3 (86 aa).

The N-terminal stretch at 1-20 is a signal peptide; sequence MRALLARLLLCVLVVSDSKG. 3 cysteine pairs are disulfide-bonded: Cys42–Cys57, Cys46–Cys59, and Cys53–Cys70. An N-linked (GlcNAc...) asparagine glycan is attached at Asn45. N-linked (GlcNAc...) asparagine glycosylation is present at Asn76.

In terms of assembly, monomer.

It is found in the secreted. Functionally, salivary chemokine-binding protein which shows chemokine neutralizing activity and binds to host chemokines CXCL1, CXCL2, CXCL3, CXCL5, CXCL6 and CXCL8. Binds to CXCL8 with 1:1 stoichiometry. Disrupts CXCL8 homodimer formation, disrupts the glycosaminoglycan-binding site of CXCL8 and inhibits the interaction of CXCL8 with CXCR2. In Rhipicephalus sanguineus (Brown dog tick), this protein is Evasin-3.